Here is a 523-residue protein sequence, read N- to C-terminus: 2-isopropylmalate synthase (523 aa).

One can recognise a Pyruvate carboxyltransferase domain in the interval 5–267 (VIIFDTTLRD…HTAINHQEIW (263 aa)). Residues aspartate 14, histidine 202, histidine 204, and asparagine 238 each contribute to the Mn(2+) site. The tract at residues 392 to 523 (RLDYFSVQSG…QHNENNKETV (132 aa)) is regulatory domain.

Belongs to the alpha-IPM synthase/homocitrate synthase family. LeuA type 1 subfamily. In terms of assembly, homodimer. Requires Mn(2+) as cofactor.

The protein localises to the cytoplasm. The catalysed reaction is 3-methyl-2-oxobutanoate + acetyl-CoA + H2O = (2S)-2-isopropylmalate + CoA + H(+). It functions in the pathway amino-acid biosynthesis; L-leucine biosynthesis; L-leucine from 3-methyl-2-oxobutanoate: step 1/4. Functionally, catalyzes the condensation of the acetyl group of acetyl-CoA with 3-methyl-2-oxobutanoate (2-ketoisovalerate) to form 3-carboxy-3-hydroxy-4-methylpentanoate (2-isopropylmalate). This Shigella sonnei (strain Ss046) protein is 2-isopropylmalate synthase.